We begin with the raw amino-acid sequence, 1839 residues long: Adenylate cyclase (1839 aa).

Disordered stretches follow at residues 1–21 (MSSPTDAERVNMRREKHPQIE), 43–87 (ITTH…PRFS), 126–245 (TSLL…PIVS), 272–315 (KNTE…QWTA), 332–388 (KRKA…DSND), and 400–468 (ESSG…SFSK). Residues 165 to 211 (SQSNESRGTRSSIFFPSTSNSRRGSATSTMTSGSRSSHPPDTPPITS) are compositionally biased toward polar residues. Over residues 212–221 (QQQEQQYDQQ) the composition is skewed to low complexity. A compositionally biased stretch (basic and acidic residues) spans 222 to 233 (RQQRPETREQEQ). The span at 332-355 (KRKAKHHHHYHHPQHPRPPHRKHY) shows a compositional bias: basic residues. A compositionally biased stretch (basic and acidic residues) spans 361–376 (PIEDKAVVEKEQEPPE). The span at 407-428 (SASTQSVSSFSSGATGASGATG) shows a compositional bias: low complexity. One can recognise a Ras-associating domain in the interval 494-574 (RRYAIRIFNI…LNGYLKSDPL (81 aa)). LRR repeat units follow at residues 632 to 655 (TSDIESLDVSNNANIFLPLDFIES), 659 to 679 (LSSLRMVNIRASKFPANVTDA), 681 to 702 (KLVSLDLERNFIKKVPDSIFKL), 704 to 726 (NLTIVNLQCNNLERLPPGFSKLK), 727 to 748 (NLQLLDISSNKFVNYPEVINSC), 750 to 771 (NLLQIDLSYNKIHSLPVSINQL), 773 to 794 (KLAKMNLFNNRLTSVGDLSQMK), 795 to 816 (NLRTLNLRCNRVTSIECHAPNL), 817 to 834 (QNLFLTDNRISTFDDDLT), 835 to 856 (RLRTLELQQNPITSMVCGGNYM), 858 to 879 (NMTSLSLNKAKLSSFSAELLSK), 882 to 903 (RLEKLELNENNLTQLPPEINKL), 905 to 926 (RLIYLSVARNKLESIPDEISDL), 928 to 950 (SLKSLDLHSNNLRMLMNNLEDLE), 951 to 971 (LTSLNVSSNLLTGFHGSPAKF), 982 to 1004 (SLLFLSVADNNLTDSIWPLVNTF), 1006 to 1027 (NLKTLNLSYNNFVEISDLKLQN), 1028 to 1048 (LTELYLSGNNFTSLPGEAVQH), 1051 to 1073 (SLKVLMLNGNKLLSLPAELSQLS), 1074 to 1096 (RLSVLDVGSNQLKYNISNYHYDW), 1103 to 1124 (DLKYLNFSGNKRFEIKSALDPE), and 1135 to 1160 (LKQLRVLGLMDVTLKTSKVPDESVSI). Positions 1173-1439 (RYGVADTLGQ…DNITILCVSL (267 aa)) constitute a PPM-type phosphatase domain. Positions 1483–1620 (AIVFTDIKNS…PVVNKAARVS (138 aa)) constitute a Guanylate cyclase domain. Residues Asp1488 and Asp1531 each coordinate Mg(2+).

This sequence belongs to the adenylyl cyclase class-3 family. Mg(2+) is required as a cofactor.

It carries out the reaction ATP = 3',5'-cyclic AMP + diphosphate. Functionally, plays essential roles in regulation of cellular metabolism by catalyzing the synthesis of a second messenger, cAMP. The protein is Adenylate cyclase (CYR1) of Lachancea kluyveri (Yeast).